Reading from the N-terminus, the 343-residue chain is Phenylalanine--tRNA ligase alpha subunit (343 aa).

Glutamate 264 serves as a coordination point for Mg(2+).

Belongs to the class-II aminoacyl-tRNA synthetase family. Phe-tRNA synthetase alpha subunit type 1 subfamily. In terms of assembly, tetramer of two alpha and two beta subunits. Requires Mg(2+) as cofactor.

Its subcellular location is the cytoplasm. It catalyses the reaction tRNA(Phe) + L-phenylalanine + ATP = L-phenylalanyl-tRNA(Phe) + AMP + diphosphate + H(+). This Aromatoleum aromaticum (strain DSM 19018 / LMG 30748 / EbN1) (Azoarcus sp. (strain EbN1)) protein is Phenylalanine--tRNA ligase alpha subunit.